A 226-amino-acid chain; its full sequence is uncharacterized protein (226 aa).

This is an uncharacterized protein from Mycobacterium bovis (strain ATCC BAA-935 / AF2122/97).